We begin with the raw amino-acid sequence, 173 residues long: Dual-action ribosomal maturation protein DarP (173 aa).

The protein belongs to the DarP family.

It is found in the cytoplasm. Functionally, member of a network of 50S ribosomal subunit biogenesis factors which assembles along the 30S-50S interface, preventing incorrect 23S rRNA structures from forming. Promotes peptidyl transferase center (PTC) maturation. The polypeptide is Dual-action ribosomal maturation protein DarP (Pseudomonas entomophila (strain L48)).